The sequence spans 255 residues: 5'-nucleotidase SurE (255 aa).

A divalent metal cation contacts are provided by aspartate 8, aspartate 9, serine 39, and asparagine 95.

It belongs to the SurE nucleotidase family. Requires a divalent metal cation as cofactor.

Its subcellular location is the cytoplasm. The catalysed reaction is a ribonucleoside 5'-phosphate + H2O = a ribonucleoside + phosphate. Functionally, nucleotidase that shows phosphatase activity on nucleoside 5'-monophosphates. The protein is 5'-nucleotidase SurE of Rubrivivax gelatinosus (strain NBRC 100245 / IL144).